The chain runs to 324 residues: Muscleblind-like protein (324 aa).

2 consecutive C3H1-type zinc fingers follow at residues 38-66 and 72-100; these read WLQV…HPPP and QGRV…HPPQ.

Belongs to the muscleblind family. As to expression, expressed in neurons around the pharynx.

It is found in the nucleus. Functionally, binds to RNA with repeat sequences 5'-CUG-3' and 5'-CCUG-3'. The chain is Muscleblind-like protein (mbl-1) from Caenorhabditis elegans.